The following is a 292-amino-acid chain: Protease HtpX homolog (292 aa).

2 consecutive transmembrane segments (helical) span residues 4–24 and 38–58; these read IALF…VASL and LGAL…ISLL. A Zn(2+)-binding site is contributed by H144. E145 is a catalytic residue. Zn(2+) is bound at residue H148. 2 helical membrane passes run 152-172 and 199-219; these read GDMV…VFLS and ITTI…VAWF. E224 provides a ligand contact to Zn(2+).

Belongs to the peptidase M48B family. Requires Zn(2+) as cofactor.

The protein localises to the cell inner membrane. This chain is Protease HtpX homolog, found in Acidovorax ebreus (strain TPSY) (Diaphorobacter sp. (strain TPSY)).